The sequence spans 305 residues: Large ribosomal subunit protein uL3c (305 aa).

The N-terminal 84 residues, 1-84 (MAAILPTFSI…AVGGLEIKMM (84 aa)), are a transit peptide targeting the chloroplast. A disordered region spans residues 228 to 256 (SHRALGSIGAGTTPGHVYKGKKMPGRMGG).

As to quaternary structure, component of the chloroplast large ribosomal subunit (LSU). Mature 70S chloroplast ribosomes of higher plants consist of a small (30S) and a large (50S) subunit. The 30S small subunit contains 1 molecule of ribosomal RNA (16S rRNA) and 24 different proteins. The 50S large subunit contains 3 rRNA molecules (23S, 5S and 4.5S rRNA) and 33 different proteins.

The protein resides in the plastid. Its subcellular location is the chloroplast. Its function is as follows. Component of the chloroplast ribosome (chloro-ribosome), a dedicated translation machinery responsible for the synthesis of chloroplast genome-encoded proteins, including proteins of the transcription and translation machinery and components of the photosynthetic apparatus. This is Large ribosomal subunit protein uL3c (RPL3) from Spinacia oleracea (Spinach).